The primary structure comprises 234 residues: Transcriptional regulatory protein WalR (234 aa).

In terms of domain architecture, Response regulatory spans 3–116 (KILIVDDEKP…ELQARVKALL (114 aa)). 4-aspartylphosphate is present on Asp52. The segment at residues 133–232 (PQPIQIGDLE…RRGVGYYMRN (100 aa)) is a DNA-binding region (ompR/PhoB-type).

In terms of assembly, monomer. Homodimer. In terms of processing, phosphorylated by WalK; can also be dephosphorylated by WalK.

The protein localises to the cytoplasm. Its function is as follows. Member of the two-component regulatory system WalK/WalR that regulates genes involved in cell wall metabolism. Binds to the promoter region of the transcription factor fabT gene in the fabTH-acp operon in vitro. Inhibits transcription of fabT, probably acting in an unphosphorylated form, thereby playing a role in the regulation of fatty acid biosynthesis. Essential for normal growth in vitro. Required for maintaining normal cellular morphology, acting, at least in part, by regulating peptidoglycan hydrolase pcsB. Involved in maintaining expression of WalRK regulon genes in exponentially growing cells. The sequence is that of Transcriptional regulatory protein WalR from Streptococcus pneumoniae serotype 2 (strain D39 / NCTC 7466).